A 148-amino-acid chain; its full sequence is Putative pre-16S rRNA nuclease (148 aa).

Belongs to the YqgF nuclease family.

Its subcellular location is the cytoplasm. Could be a nuclease involved in processing of the 5'-end of pre-16S rRNA. The protein is Putative pre-16S rRNA nuclease of Chlamydia trachomatis serovar A (strain ATCC VR-571B / DSM 19440 / HAR-13).